Reading from the N-terminus, the 638-residue chain is Chaperone protein DnaK (638 aa).

At threonine 199 the chain carries Phosphothreonine; by autocatalysis. A compositionally biased stretch (low complexity) spans 603–618; sequence YAQPGAEAGAEQQGSA. Residues 603–638 are disordered; the sequence is YAQPGAEAGAEQQGSANNADDDIVDAEFEEVNDDKK. A compositionally biased stretch (acidic residues) spans 621 to 638; that stretch reads ADDDIVDAEFEEVNDDKK.

This sequence belongs to the heat shock protein 70 family.

Functionally, acts as a chaperone. The chain is Chaperone protein DnaK from Hydrogenovibrio crunogenus (strain DSM 25203 / XCL-2) (Thiomicrospira crunogena).